The primary structure comprises 166 residues: MTYIDPTHLDLEDRVVSINRVTKVVKGGRRLRFAAIVIVGDKNGHVGFGTGKAQEVPEAIRKAVEDAKKNLINVPKVGTTLPHEVIGRFGAGRVLLKPAVEGSGIAAGGAVRAVMELAGIDDVTSKTLGSKTAINVIRATIDGLTRMKTAEQIAELRNISVESLQN.

The 64-residue stretch at 11–74 (LEDRVVSINR…EDAKKNLINV (64 aa)) folds into the S5 DRBM domain.

Belongs to the universal ribosomal protein uS5 family. Part of the 30S ribosomal subunit. Contacts proteins S4 and S8.

Its function is as follows. With S4 and S12 plays an important role in translational accuracy. Functionally, located at the back of the 30S subunit body where it stabilizes the conformation of the head with respect to the body. The protein is Small ribosomal subunit protein uS5 of Latilactobacillus sakei subsp. sakei (strain 23K) (Lactobacillus sakei subsp. sakei).